A 336-amino-acid polypeptide reads, in one-letter code: UbiA prenyltransferase domain-containing protein 1 (336 aa).

The disordered stretch occupies residues 1 to 22 (MQEMKPAALSGSNGLNGASGSS). The span at 7–22 (AALSGSNGLNGASGSS) shows a compositional bias: low complexity. 7 helical membrane-spanning segments follow: residues 79–99 (LLLL…GNLV), 129–149 (VVMF…LLYF), 158–178 (LALI…GIGL), 180–200 (YVAL…VMFA), 201–221 (HAVQ…PLAL), 254–274 (LSYV…CILA), and 315–335 (LLMG…SLPL).

Belongs to the UbiA prenyltransferase family.

It localises to the endoplasmic reticulum membrane. The protein localises to the golgi apparatus membrane. Its subcellular location is the mitochondrion membrane. It carries out the reaction menadiol + (2E,6E,10E)-geranylgeranyl diphosphate = menaquinol-4 + diphosphate. The catalysed reaction is all-trans-decaprenyl diphosphate + 4-hydroxybenzoate = 4-hydroxy-3-(all-trans-decaprenyl)benzoate + diphosphate. It participates in quinol/quinone metabolism; menaquinone biosynthesis. Its pathway is cofactor biosynthesis; ubiquinone biosynthesis. In terms of biological role, prenyltransferase that mediates the formation of menaquinone-4 (MK-4) and coenzyme Q10. MK-4 is a vitamin K2 isoform required for endothelial cell development. Mediates the conversion of phylloquinone (PK) into MK-4, probably by cleaving the side chain of phylloquinone (PK) to release 2-methyl-1,4-naphthoquinone (menadione; K3) and then prenylating it with geranylgeranyl pyrophosphate (GGPP) to form MK-4. Also plays a role in cardiovascular development independently of MK-4 biosynthesis, by acting as a coenzyme Q10 biosynthetic enzyme: coenzyme Q10, also named ubiquinone, plays an important antioxidant role in the cardiovascular system. Mediates biosynthesis of coenzyme Q10 in the Golgi membrane, leading to protect cardiovascular tissues from nos3/eNOS-dependent oxidative stress. The sequence is that of UbiA prenyltransferase domain-containing protein 1 (ubiad1) from Danio rerio (Zebrafish).